The sequence spans 188 residues: MADQADLLESPQFEEETSMQKFKRRLKEEPLIPLGCAATCYALYRAYRSGKAKDSVEMNRMFRARIYAQFFTLLAVVAGGMYYKTERKQRREFERKVEERKAQEKRDAWLRELEAREKEDKGWRERHAAVSEAANNPVGVSAVVAGKKEEEEKGVDGNVNQAPQEEGGVKRGTGILDAVKALVRGKKD.

Residues Asp3 to Glu94 form the HIG1 domain. Helical transmembrane passes span Pro30–Ala46 and Ile66–Tyr83. A coiled-coil region spans residues Tyr83–Glu119. The segment at Lys147–Arg171 is disordered.

The protein belongs to the RCF1 family. As to quaternary structure, associates with the respiratory chain complex III/complex IV supercomplex.

Its subcellular location is the mitochondrion membrane. Cytochrome c oxidase subunit which plays a role in assembly of respiratory supercomplexes. The sequence is that of Respiratory supercomplex factor 1, mitochondrial (rcf1) from Talaromyces stipitatus (strain ATCC 10500 / CBS 375.48 / QM 6759 / NRRL 1006) (Penicillium stipitatum).